A 474-amino-acid polypeptide reads, in one-letter code: Proline--tRNA ligase (474 aa).

Belongs to the class-II aminoacyl-tRNA synthetase family. ProS type 3 subfamily. As to quaternary structure, homodimer.

The protein localises to the cytoplasm. The enzyme catalyses tRNA(Pro) + L-proline + ATP = L-prolyl-tRNA(Pro) + AMP + diphosphate. In terms of biological role, catalyzes the attachment of proline to tRNA(Pro) in a two-step reaction: proline is first activated by ATP to form Pro-AMP and then transferred to the acceptor end of tRNA(Pro). In Mycoplasma capricolum subsp. capricolum (strain California kid / ATCC 27343 / NCTC 10154), this protein is Proline--tRNA ligase.